The following is a 416-amino-acid chain: ATP-dependent Clp protease ATP-binding subunit ClpX (416 aa).

One can recognise a ClpX-type ZB domain in the interval 1 to 54 (MFKFGDEKGQLKCSFCGKSQEQVRKLVAGPGVYICDECIELCNEIIEEELNDDV). Zn(2+) contacts are provided by Cys13, Cys16, Cys35, and Cys38. Position 117 to 124 (117 to 124 (PTGCGKTL)) interacts with ATP.

The protein belongs to the ClpX chaperone family. As to quaternary structure, component of the ClpX-ClpP complex. Forms a hexameric ring that, in the presence of ATP, binds to fourteen ClpP subunits assembled into a disk-like structure with a central cavity, resembling the structure of eukaryotic proteasomes.

In terms of biological role, ATP-dependent specificity component of the Clp protease. It directs the protease to specific substrates. Can perform chaperone functions in the absence of ClpP. The sequence is that of ATP-dependent Clp protease ATP-binding subunit ClpX from Halothermothrix orenii (strain H 168 / OCM 544 / DSM 9562).